A 280-amino-acid chain; its full sequence is Probable S-methyl-5'-thioinosine phosphorylase (280 aa).

Phosphate is bound by residues threonine 8 and 50–51; that span reads RH. A substrate-binding site is contributed by methionine 175. Threonine 176 is a binding site for phosphate. 199–201 contributes to the substrate binding site; that stretch reads NYA.

This sequence belongs to the PNP/MTAP phosphorylase family. MTAP subfamily. In terms of assembly, homotrimer.

It catalyses the reaction S-methyl-5'-thioinosine + phosphate = 5-(methylsulfanyl)-alpha-D-ribose 1-phosphate + hypoxanthine. It functions in the pathway purine metabolism; purine nucleoside salvage. Catalyzes the reversible phosphorylation of S-methyl-5'-thioinosine (MTI) to hypoxanthine and 5-methylthioribose-1-phosphate. Involved in the breakdown of S-methyl-5'-thioadenosine (MTA), a major by-product of polyamine biosynthesis. Catabolism of (MTA) occurs via deamination to MTI and phosphorolysis to hypoxanthine. This chain is Probable S-methyl-5'-thioinosine phosphorylase, found in Methanothermobacter thermautotrophicus (strain ATCC 29096 / DSM 1053 / JCM 10044 / NBRC 100330 / Delta H) (Methanobacterium thermoautotrophicum).